A 268-amino-acid chain; its full sequence is Nickel import ATP-binding protein NikE (268 aa).

The ABC transporter domain maps to 4–252; the sequence is LNVCGLSHHY…SSDAGRVLQN (249 aa). 45-52 lines the ATP pocket; it reads GRSGCGKS.

It belongs to the ABC transporter superfamily. Nickel importer (TC 3.A.1.5.3) family. As to quaternary structure, the complex is composed of two ATP-binding proteins (NikD and NikE), two transmembrane proteins (NikB and NikC) and a solute-binding protein (NikA).

The protein localises to the cell inner membrane. The catalysed reaction is Ni(2+)(out) + ATP + H2O = Ni(2+)(in) + ADP + phosphate + H(+). Part of the ABC transporter complex NikABCDE involved in nickel import. Responsible for energy coupling to the transport system. This Shigella flexneri serotype 5b (strain 8401) protein is Nickel import ATP-binding protein NikE.